A 315-amino-acid chain; its full sequence is Aspartate carbamoyltransferase catalytic subunit (315 aa).

Carbamoyl phosphate contacts are provided by arginine 65 and threonine 66. Lysine 93 is an L-aspartate binding site. Carbamoyl phosphate is bound by residues arginine 115, histidine 145, and glutamine 148. L-aspartate contacts are provided by arginine 179 and arginine 234. The carbamoyl phosphate site is built by glycine 275 and proline 276.

The protein belongs to the aspartate/ornithine carbamoyltransferase superfamily. ATCase family. As to quaternary structure, heterododecamer (2C3:3R2) of six catalytic PyrB chains organized as two trimers (C3), and six regulatory PyrI chains organized as three dimers (R2).

The enzyme catalyses carbamoyl phosphate + L-aspartate = N-carbamoyl-L-aspartate + phosphate + H(+). Its pathway is pyrimidine metabolism; UMP biosynthesis via de novo pathway; (S)-dihydroorotate from bicarbonate: step 2/3. Its function is as follows. Catalyzes the condensation of carbamoyl phosphate and aspartate to form carbamoyl aspartate and inorganic phosphate, the committed step in the de novo pyrimidine nucleotide biosynthesis pathway. This chain is Aspartate carbamoyltransferase catalytic subunit, found in Xanthomonas euvesicatoria pv. vesicatoria (strain 85-10) (Xanthomonas campestris pv. vesicatoria).